Here is a 621-residue protein sequence, read N- to C-terminus: SH2B adapter protein 2 (621 aa).

At Tyr47 the chain carries Phosphotyrosine. Ser130 bears the Phosphoserine mark. Residues 143–166 (RRSSPEPDGGATPKAAEPASEPRD) are disordered. Residues 186 to 299 (DIQREGALRF…WVADIQGCVD (114 aa)) form the PH domain. Ser303 is modified (phosphoserine). Residues 409–507 (WFHGTLSRVK…SADITLRSYV (99 aa)) form the SH2 domain. Disordered stretches follow at residues 507 to 528 (VRAQGPPPDPGPAPNTAAPVPA) and 549 to 611 (PASP…LGRA). The span at 552 to 571 (PSNGAGASSSSGSSSSATSL) shows a compositional bias: low complexity. Position 597 is a phosphoserine (Ser597). Tyr618 carries the post-translational modification Phosphotyrosine.

It belongs to the SH2B adapter family. In terms of assembly, homodimer. Interacts with KIT/c-KIT, SHC1, EPOR, PDGFR, VAV1 and VAV3. Interacts (via N-terminal region) with SHC1. Interacts (via the phosphorylated C-terminus) with GRB2. Interacts (via its SH2 domain) with EPOR, INSR and KIT. Interacts with GRB2 after B-cell antigen receptor stimulation. Interacts (via PH domain) with VAV3. Interacts with NTRK1, NTRK2 and NTRK3 (phosphorylated); after stimulation of the receptor by its extracellular ligand and subsequent autophosphorylation of the receptor. Binds INSR, GRB2, ASB6 and CAP. Insulin stimulation leads to dissociation of CAP. Binds CBS only when SH2B2/APS has become phosphorylated. INSR binding does not depend on the phosphorylation of SH2B2/APS. Tyrosine phosphorylated by JAK2, KIT and other kinases activated by B-cell receptor in response to stimulation with cytokines, IL3, IL5, PDGF, IGF1, IGF2, CSF2/GM-CSF and cross-linking of the B-cell receptor complex. As to expression, strongly expressed in brain; also expressed in spleen, kidney and skeletal muscle, and at low levels in small intestine and bone marrow. Strongly expressed in B-cell lines, but not T-cell lines. Also expressed in myeloid and fibroblast cell lines.

It localises to the cytoplasm. The protein localises to the cell membrane. Its function is as follows. Adapter protein for several members of the tyrosine kinase receptor family. Involved in multiple signaling pathways. May be involved in coupling from immunoreceptor to Ras signaling. Acts as a negative regulator of cytokine signaling in collaboration with CBL. Binds to EPOR and suppresses EPO-induced STAT5 activation, possibly through a masking effect on STAT5 docking sites in EPOR. Suppresses PDGF-induced mitogenesis. May induce cytoskeletal reorganization via interaction with VAV3. The sequence is that of SH2B adapter protein 2 (Sh2b2) from Mus musculus (Mouse).